The primary structure comprises 707 residues: E3 ubiquitin-protein ligase MARCHF7 (707 aa).

M1 carries the N-acetylmethionine modification. 5 disordered regions span residues 1-126, 157-279, 294-343, 361-425, and 444-473; these read MESK…QVPR, LMDY…RRTT, FFSR…RASE, SHNH…HIFR, and AANR…GRNT. Positions 17–33 are enriched in low complexity; sequence SSSLSARMMSGSRGSSL. Residues 37–48 are compositionally biased toward basic and acidic residues; sequence YHSRDSSFRLDS. Residues 52–65 show a composition bias toward low complexity; that stretch reads STSASASASPFQSA. Composition is skewed to polar residues over residues 66-83, 95-126, 189-212, and 254-270; these read WYSE…SQNQ, SCTN…QVPR, NSMS…HQTI, and ISNS…FQES. Residues 294–303 are compositionally biased toward low complexity; sequence FFSRRSSQDS. Polar residues-rich tracts occupy residues 304 to 336, 373 to 392, and 412 to 421; these read LNTR…TSEV, FNQE…SLRN, and IPTSDTSSRS. Phosphoserine is present on residues S317 and S389. The span at 444-470 shows a compositional bias: low complexity; that stretch reads AANRPQASAASSSATTGGSTSDSAQGG. The RING-CH-type zinc finger occupies 544–614; the sequence is SEEEEGDLCR…ELCKEKLELN (71 aa). Residues C552, C555, C570, C572, H580, C583, C604, and C607 each contribute to the Zn(2+) site. At T686 the chain carries Phosphothreonine. Phosphoserine occurs at positions 687 and 691.

It localises to the cytoplasm. The catalysed reaction is S-ubiquitinyl-[E2 ubiquitin-conjugating enzyme]-L-cysteine + [acceptor protein]-L-lysine = [E2 ubiquitin-conjugating enzyme]-L-cysteine + N(6)-ubiquitinyl-[acceptor protein]-L-lysine.. Its pathway is protein modification; protein ubiquitination. Its function is as follows. E3 ubiquitin-protein ligase which may specifically enhance the E2 activity of HIP2. E3 ubiquitin ligases accept ubiquitin from an E2 ubiquitin-conjugating enzyme in the form of a thioester and then directly transfer the ubiquitin to targeted substrates. May be involved in T-cell proliferation by regulating LIF secretion. May play a role in lysosome homeostasis. Promotes 'Lys-6', 'Lys-11' and 'Lys-63'-linked mixed polyubiquitination on ATG14 leading to the inhibition of autophagy by impairing the interaction between ATG14 and STX7. Participates in the dopamine-mediated negative regulation of the NLRP3 inflammasome by promoting its uibiquitination and subsequent degradation. The sequence is that of E3 ubiquitin-protein ligase MARCHF7 (MARCHF7) from Pongo abelii (Sumatran orangutan).